A 109-amino-acid chain; its full sequence is Class I hydrophobin 18 (109 aa).

The first 20 residues, Met1–Ala20, serve as a signal peptide directing secretion. Intrachain disulfides connect Cys28-Cys88, Cys35-Cys82, Cys36-Cys69, and Cys89-Cys102. N-linked (GlcNAc...) asparagine glycosylation is found at Asn91 and Asn106.

Belongs to the fungal hydrophobin family. As to quaternary structure, self-assembles to form functional amyloid fibrils called rodlets. Self-assembly into fibrillar rodlets occurs spontaneously at hydrophobic:hydrophilic interfaces and the rodlets further associate laterally to form amphipathic monolayers.

Its subcellular location is the secreted. It localises to the cell wall. In terms of biological role, aerial growth, conidiation, and dispersal of filamentous fungi in the environment rely upon a capability of their secreting small amphipathic proteins called hydrophobins (HPBs) with low sequence identity. Class I can self-assemble into an outermost layer of rodlet bundles on aerial cell surfaces, conferring cellular hydrophobicity that supports fungal growth, development and dispersal; whereas Class II form highly ordered films at water-air interfaces through intermolecular interactions but contribute nothing to the rodlet structure. This is Class I hydrophobin 18 from Pleurotus ostreatus (strain PC15) (Oyster mushroom).